A 395-amino-acid polypeptide reads, in one-letter code: Sulfate adenylyltransferase (395 aa).

This sequence belongs to the sulfate adenylyltransferase family.

It carries out the reaction sulfate + ATP + H(+) = adenosine 5'-phosphosulfate + diphosphate. The protein operates within sulfur metabolism; hydrogen sulfide biosynthesis; sulfite from sulfate: step 1/3. The polypeptide is Sulfate adenylyltransferase (Synechococcus elongatus (strain ATCC 33912 / PCC 7942 / FACHB-805) (Anacystis nidulans R2)).